The sequence spans 434 residues: Nicotinate phosphoribosyltransferase (434 aa).

Phosphohistidine; by autocatalysis is present on His-242.

Belongs to the NAPRTase family. Post-translationally, transiently phosphorylated on a His residue during the reaction cycle. Phosphorylation strongly increases the affinity for substrates and increases the rate of nicotinate D-ribonucleotide production. Dephosphorylation regenerates the low-affinity form of the enzyme, leading to product release.

It catalyses the reaction nicotinate + 5-phospho-alpha-D-ribose 1-diphosphate + ATP + H2O = nicotinate beta-D-ribonucleotide + ADP + phosphate + diphosphate. It functions in the pathway cofactor biosynthesis; NAD(+) biosynthesis; nicotinate D-ribonucleotide from nicotinate: step 1/1. Functionally, catalyzes the synthesis of beta-nicotinate D-ribonucleotide from nicotinate and 5-phospho-D-ribose 1-phosphate at the expense of ATP. The sequence is that of Nicotinate phosphoribosyltransferase from Nitrobacter hamburgensis (strain DSM 10229 / NCIMB 13809 / X14).